We begin with the raw amino-acid sequence, 484 residues long: Cobyric acid synthase (484 aa).

One can recognise a GATase cobBQ-type domain in the interval Ala-251–Tyr-438. Cys-333 acts as the Nucleophile in catalysis. His-430 is a catalytic residue.

Belongs to the CobB/CobQ family. CobQ subfamily.

It functions in the pathway cofactor biosynthesis; adenosylcobalamin biosynthesis. Functionally, catalyzes amidations at positions B, D, E, and G on adenosylcobyrinic A,C-diamide. NH(2) groups are provided by glutamine, and one molecule of ATP is hydrogenolyzed for each amidation. The sequence is that of Cobyric acid synthase from Allorhizobium ampelinum (strain ATCC BAA-846 / DSM 112012 / S4) (Agrobacterium vitis (strain S4)).